Consider the following 803-residue polypeptide: Volume-regulated anion channel subunit LRRC8C (803 aa).

Topologically, residues 1–22 (MIPVTEFRQFSEQQPAFRVLKP) are cytoplasmic. A helical membrane pass occupies residues 23–48 (WWDVFTDYLSVAMLMIGVFGCTLQVM). At 49–124 (QDKIICLPKR…CYERALHWYA (76 aa)) the chain is on the extracellular side. Intrachain disulfides connect cysteine 54–cysteine 308 and cysteine 115–cysteine 293. The chain crosses the membrane as a helical span at residues 125 to 144 (KYFPYLVLIHTLVFMLCSNF). Over 145-262 (WFKFPGSSSK…EEGDILYAMY (118 aa)) the chain is Cytoplasmic. A disordered region spans residues 177–206 (EVSGEDSEEKDNRKNNMNRSGTIQSGPEGN). Over residues 191-206 (NNMNRSGTIQSGPEGN) the composition is skewed to polar residues. Serine 212 and serine 215 each carry phosphoserine. A helical transmembrane segment spans residues 263–284 (VRQTVLKVIKFLIIIAYNSALV). At 285 to 314 (SKVQFTVDCNVDIQDMTGYKNFSCNHTMAH) the chain is on the extracellular side. The helical transmembrane segment at 315–339 (LFSKLSFCYLCFVSIYGLTCLYTLY) threads the bilayer. At 340–803 (WLFYRSLREY…SDVREQMKAD (464 aa)) the chain is on the cytoplasmic side. LRR repeat units follow at residues 409-420 (WTPDKLRQKLQT), 421-443 (NAHN…VFEI), 446-466 (LQSL…IAQL), 467-488 (DNLQ…ALSF), 490-513 (KENL…MYGL), 515-537 (NLEE…TLES), 541-563 (LKSL…VVDV), 566-586 (HLQK…NNLK), 588-611 (MTNL…VFSL), 613-635 (SLQE…SFQH), 637-659 (RKLT…IKKL), 660-682 (TSLE…LFLC), 684-705 (KIRY…IGVL), 706-728 (QSLQ…LYFC), 730-751 (KLKT…IGNL), 752-774 (LFLS…LGDC), and 776-799 (ALKR…VREQ).

This sequence belongs to the LRRC8 family. As to quaternary structure, heterohexamer; oligomerizes with other LRRC8 proteins (LRRC8A, LRRC8B, LRRC8D and/or LRRC8E) to form a heterohexamer. Homoheptamer; inactive, likely because it is not targeted to the plasma membrane in the absence of LRRC8A. In vivo, the subunit composition may depend primarily on expression levels, and heterooligomeric channels containing various proportions of the different LRRC8 proteins may coexist. Expressed at very low levels in adipose tissue.

It localises to the cell membrane. Its subcellular location is the endoplasmic reticulum membrane. The enzyme catalyses chloride(in) = chloride(out). It carries out the reaction iodide(out) = iodide(in). The catalysed reaction is taurine(out) = taurine(in). It catalyses the reaction 2',3'-cGAMP(out) = 2',3'-cGAMP(in). Non-essential component of the volume-regulated anion channel (VRAC, also named VSOAC channel), an anion channel required to maintain a constant cell volume in response to extracellular or intracellular osmotic changes. The VRAC channel conducts iodide better than chloride and can also conduct organic osmolytes like taurine. Plays a redundant role in the efflux of amino acids, such as aspartate and glutamate, in response to osmotic stress. The VRAC channel also mediates transport of immunoreactive cyclic dinucleotide GMP-AMP (2'-3'-cGAMP), an immune messenger produced in response to DNA virus in the cytosol. Channel activity requires LRRC8A plus at least one other family member (LRRC8B, LRRC8C, LRRC8D or LRRC8E); channel characteristics depend on the precise subunit composition. May play a role in adipogenesis. In Mus musculus (Mouse), this protein is Volume-regulated anion channel subunit LRRC8C.